Consider the following 354-residue polypeptide: Petrobactin import system permease protein FatC (354 aa).

9 helical membrane passes run 37–57 (YWIV…GLLV), 77–97 (IVAI…TVAF), 116–136 (LYSA…LINF), 141–161 (SFLF…GWLL), 168–188 (LQLM…VSTF), 214–234 (PAYF…IFAH), 259–279 (VIYT…LIGP), 302–322 (YIFP…YFLM), and 329–349 (QGVV…TIVL).

It belongs to the binding-protein-dependent transport system permease family. FecCD subfamily. In terms of assembly, the complex is composed of two ATP-binding proteins (FatE), two transmembrane proteins (FatC and FatD) and a solute-binding protein (FpuA).

The protein localises to the cell membrane. Its function is as follows. Part of an ABC transporter complex involved in ferric-petrobactin uptake. Probably responsible for the translocation of the substrate across the membrane. The sequence is that of Petrobactin import system permease protein FatC from Bacillus anthracis.